Here is a 554-residue protein sequence, read N- to C-terminus: Formate--tetrahydrofolate ligase (554 aa).

65-72 (TPLGEGKT) contributes to the ATP binding site.

This sequence belongs to the formate--tetrahydrofolate ligase family.

The enzyme catalyses (6S)-5,6,7,8-tetrahydrofolate + formate + ATP = (6R)-10-formyltetrahydrofolate + ADP + phosphate. It participates in one-carbon metabolism; tetrahydrofolate interconversion. In Aliivibrio salmonicida (strain LFI1238) (Vibrio salmonicida (strain LFI1238)), this protein is Formate--tetrahydrofolate ligase.